The primary structure comprises 283 residues: Pyridoxal kinase PdxY (283 aa).

Ser8 lines the substrate pocket. The ATP site is built by Asp110 and Glu147. Asp219 lines the substrate pocket.

Belongs to the pyridoxine kinase family. PdxY subfamily. Homodimer. It depends on Mg(2+) as a cofactor.

It carries out the reaction pyridoxal + ATP = pyridoxal 5'-phosphate + ADP + H(+). It participates in cofactor metabolism; pyridoxal 5'-phosphate salvage; pyridoxal 5'-phosphate from pyridoxal: step 1/1. Its function is as follows. Pyridoxal kinase involved in the salvage pathway of pyridoxal 5'-phosphate (PLP). Catalyzes the phosphorylation of pyridoxal to PLP. This Corynebacterium diphtheriae (strain ATCC 700971 / NCTC 13129 / Biotype gravis) protein is Pyridoxal kinase PdxY.